Reading from the N-terminus, the 165-residue chain is Pyruvoyl-dependent arginine decarboxylase 1 (165 aa).

Residue Ser45 is modified to Pyruvic acid (Ser).

The protein belongs to the PdaD family. Pyruvate serves as cofactor.

The catalysed reaction is L-arginine + H(+) = agmatine + CO2. This Methanosarcina acetivorans (strain ATCC 35395 / DSM 2834 / JCM 12185 / C2A) protein is Pyruvoyl-dependent arginine decarboxylase 1 (pdaD1).